Reading from the N-terminus, the 37-residue chain is MKVMASVKRICRNCKVIKRHGVVRVICTDPRHKQRQG.

This sequence belongs to the bacterial ribosomal protein bL36 family.

The polypeptide is Large ribosomal subunit protein bL36 (Bordetella bronchiseptica (strain ATCC BAA-588 / NCTC 13252 / RB50) (Alcaligenes bronchisepticus)).